We begin with the raw amino-acid sequence, 258 residues long: Type III pantothenate kinase (258 aa).

ATP is bound at residue 6-13 (DVGNTNTV). Residues Tyr100 and 107 to 110 (GADR) each bind substrate. The active-site Proton acceptor is Asp109. Asp129 lines the K(+) pocket. Position 132 (Thr132) interacts with ATP. Thr184 contacts substrate.

Belongs to the type III pantothenate kinase family. Homodimer. It depends on NH4(+) as a cofactor. K(+) is required as a cofactor.

Its subcellular location is the cytoplasm. The enzyme catalyses (R)-pantothenate + ATP = (R)-4'-phosphopantothenate + ADP + H(+). Its pathway is cofactor biosynthesis; coenzyme A biosynthesis; CoA from (R)-pantothenate: step 1/5. Catalyzes the phosphorylation of pantothenate (Pan), the first step in CoA biosynthesis. In Bacillus licheniformis (strain ATCC 14580 / DSM 13 / JCM 2505 / CCUG 7422 / NBRC 12200 / NCIMB 9375 / NCTC 10341 / NRRL NRS-1264 / Gibson 46), this protein is Type III pantothenate kinase.